The primary structure comprises 648 residues: MSRKASENVEYTLRSLSSLMGERRRKQPEPDAASAAGECSLLAAAESSTSLQSAGAGGGGVGDLERAARRQFQQDETPAFVYVVAVFSALGGFLFGYDTGVVSGAMLLLKRQLSLDALWQELLVSSTVGAAAVSALAGGALNGVFGRRAAILLASALFTAGSAVLAAANNKETLLAGRLVVGLGIGIASMTVPVYIAEVSPPNLRGRLVTINTLFITGGQFFASVVDGAFSYLQKDGWRYMLGLAAVPAVIQFFGFLFLPESPRWLIQKGQTQKARRILSQMRGNQTIDEEYDSIKNNIEEEEKEVGSAGPVICRMLSYPPTRRALIVGCGLQMFQQLSGINTIMYYSATILQMSGVEDDRLAIWLASVTAFTNFIFTLVGVWLVEKVGRRKLTFGSLAGTTVALIILALGFVLSAQVSPRITFKPIAPSGQNATCTRYSYCNECMLDPDCGFCYKMNKSTVIDSSCVPVNKASTNEAAWGRCENETKFKTEDIFWAYNFCPTPYSWTALLGLILYLVFFAPGMGPMPWTVNSEIYPLWARSTGNACSSGINWIFNVLVSLTFLHTAEYLTYYGAFFLYAGFAAVGLLFIYGCLPETKGKKLEEIESLFDNRLCTCGTSDSDEGRYIEYIRVKGSNYHLSDNDASDVE.

Over 1–76 (MSRKASENVE…AARRQFQQDE (76 aa)) the chain is Cytoplasmic. Residues Ser-6, Ser-47, and Ser-50 each carry the phosphoserine modification. A helical transmembrane segment spans residues 77-97 (TPAFVYVVAVFSALGGFLFGY). Topologically, residues 98–125 (DTGVVSGAMLLLKRQLSLDALWQELLVS) are extracellular. A helical membrane pass occupies residues 126 to 146 (STVGAAAVSALAGGALNGVFG). Residues 147-148 (RR) are Cytoplasmic-facing. A helical membrane pass occupies residues 149–169 (AAILLASALFTAGSAVLAAAN). Residues 170–178 (NKETLLAGR) are Extracellular-facing. The chain crosses the membrane as a helical span at residues 179–199 (LVVGLGIGIASMTVPVYIAEV). At 200 to 212 (SPPNLRGRLVTIN) the chain is on the cytoplasmic side. Residues 213–233 (TLFITGGQFFASVVDGAFSYL) traverse the membrane as a helical segment. Topologically, residues 234-239 (QKDGWR) are extracellular. The chain crosses the membrane as a helical span at residues 240 to 260 (YMLGLAAVPAVIQFFGFLFLP). The Cytoplasmic segment spans residues 261–324 (ESPRWLIQKG…RMLSYPPTRR (64 aa)). The chain crosses the membrane as a helical span at residues 325 to 345 (ALIVGCGLQMFQQLSGINTIM). The Extracellular segment spans residues 346 to 363 (YYSATILQMSGVEDDRLA). Residues 364-384 (IWLASVTAFTNFIFTLVGVWL) traverse the membrane as a helical segment. The Cytoplasmic portion of the chain corresponds to 385–393 (VEKVGRRKL). A helical membrane pass occupies residues 394–414 (TFGSLAGTTVALIILALGFVL). Residues 415–508 (SAQVSPRITF…NFCPTPYSWT (94 aa)) lie on the Extracellular side of the membrane. 3 N-linked (GlcNAc...) asparagine glycosylation sites follow: Asn-433, Asn-458, and Asn-485. A helical membrane pass occupies residues 509–529 (ALLGLILYLVFFAPGMGPMPW). Residues 530–549 (TVNSEIYPLWARSTGNACSS) are Cytoplasmic-facing. Residues 550-570 (GINWIFNVLVSLTFLHTAEYL) form a helical membrane-spanning segment. At 571 to 573 (TYY) the chain is on the extracellular side. The helical transmembrane segment at 574 to 594 (GAFFLYAGFAAVGLLFIYGCL) threads the bilayer. Topologically, residues 595-648 (PETKGKKLEEIESLFDNRLCTCGTSDSDEGRYIEYIRVKGSNYHLSDNDASDVE) are cytoplasmic. Phosphoserine occurs at positions 640 and 645.

This sequence belongs to the major facilitator superfamily. Sugar transporter (TC 2.A.1.1) family. Post-translationally, glycosylated. Predominantly expressed in the brain.

It is found in the cell membrane. The enzyme catalyses myo-inositol(out) + H(+)(out) = myo-inositol(in) + H(+)(in). Its function is as follows. H(+)-myo-inositol cotransporter. Can also transport related stereoisomers. The chain is Proton myo-inositol cotransporter from Homo sapiens (Human).